The chain runs to 86 residues: Small ribosomal subunit protein bS16 (86 aa).

It belongs to the bacterial ribosomal protein bS16 family.

This chain is Small ribosomal subunit protein bS16, found in Xylella fastidiosa (strain 9a5c).